Consider the following 601-residue polypeptide: Arginine--tRNA ligase (601 aa).

The 'HIGH' region motif lies at 135–145 (ANPTGPLHLGH).

This sequence belongs to the class-I aminoacyl-tRNA synthetase family. As to quaternary structure, monomer.

It is found in the cytoplasm. It carries out the reaction tRNA(Arg) + L-arginine + ATP = L-arginyl-tRNA(Arg) + AMP + diphosphate. This chain is Arginine--tRNA ligase, found in Gloeobacter violaceus (strain ATCC 29082 / PCC 7421).